The sequence spans 162 residues: TSIFETAGVGQPAYATIGAGVVNTVFTLVSVFLVERAGRRTLHLLGLAGMCGCAILMTIALLLLERLPAMSYVSIVAIFGFVAFFEIGPGPIPWFIVAELFSQGPRPAAMAVAGFCNWTSNFIIGMGFQYIAXAMGPYVFLLFAVLLLAFFIFTFLKVPETR.

At 1-13 (TSIFETAGVGQPA) the chain is on the extracellular side. A helical membrane pass occupies residues 14–34 (YATIGAGVVNTVFTLVSVFLV). Asparagine 23 is a binding site for D-glucose. Residues 35-43 (ERAGRRTLH) lie on the Cytoplasmic side of the membrane. Residues 44–64 (LLGLAGMCGCAILMTIALLLL) traverse the membrane as a helical segment. The Extracellular segment spans residues 65–75 (ERLPAMSYVSI). A helical membrane pass occupies residues 76–96 (VAIFGFVAFFEIGPGPIPWFI). D-glucose contacts are provided by glutamate 86 and tryptophan 94. Over 97 to 107 (VAELFSQGPRP) the chain is Cytoplasmic. Residues 108–128 (AAMAVAGFCNWTSNFIIGMGF) form a helical membrane-spanning segment. The Extracellular portion of the chain corresponds to 129–135 (QYIAXAM). Residues 136–156 (GPYVFLLFAVLLLAFFIFTFL) form a helical membrane-spanning segment. Residues 157 to 162 (KVPETR) are Cytoplasmic-facing.

It belongs to the major facilitator superfamily. Sugar transporter (TC 2.A.1.1) family. Glucose transporter subfamily. As to quaternary structure, binds to DAXX. Interacts via its N-terminus with SRFBP1. Interacts with NDUFA9. Interacts with TRARG1; the interaction is required for proper SLC2A4 recycling after insulin stimulation. Post-translationally, sumoylated. In terms of processing, palmitoylated. Palmitoylation by ZDHHC7 controls the insulin-dependent translocation of GLUT4 to the plasma membrane.

It is found in the cell membrane. The protein localises to the endomembrane system. It localises to the cytoplasm. Its subcellular location is the perinuclear region. The enzyme catalyses D-glucose(out) = D-glucose(in). In terms of biological role, insulin-regulated facilitative glucose transporter, which plays a key role in removal of glucose from circulation. Response to insulin is regulated by its intracellular localization: in the absence of insulin, it is efficiently retained intracellularly within storage compartments in muscle and fat cells. Upon insulin stimulation, translocates from these compartments to the cell surface where it transports glucose from the extracellular milieu into the cell. In Canis lupus familiaris (Dog), this protein is Solute carrier family 2, facilitated glucose transporter member 4.